We begin with the raw amino-acid sequence, 172 residues long: Endoribonuclease YbeY (172 aa).

3 residues coordinate Zn(2+): His-137, His-141, and His-147.

This sequence belongs to the endoribonuclease YbeY family. Zn(2+) is required as a cofactor.

Its subcellular location is the cytoplasm. Single strand-specific metallo-endoribonuclease involved in late-stage 70S ribosome quality control and in maturation of the 3' terminus of the 16S rRNA. This Dehalococcoides mccartyi (strain ATCC BAA-2266 / KCTC 15142 / 195) (Dehalococcoides ethenogenes (strain 195)) protein is Endoribonuclease YbeY.